A 423-amino-acid polypeptide reads, in one-letter code: D-threonate kinase (423 aa).

Residues Asp9, Arg51, and 81 to 84 (KIDS) each bind substrate. Residues Ser245, 355-358 (GGDI), and Gly401 contribute to the ATP site.

It belongs to the four-carbon acid sugar kinase family.

The catalysed reaction is D-threonate + ATP = 4-O-phospho-D-threonate + ADP + H(+). In terms of biological role, catalyzes the ATP-dependent phosphorylation of D-threonate to D-threonate 4-phosphate. Can also phosphorylate 4-hydroxy-L-threonine, with lower efficiency. This side reaction may serve to deal with the toxicity of 4-hydroxy-L-threonine by converting it into 4-hydroxy-L-threonine 4-phosphate, a useful product that can be used by PdxA2. This Salmonella typhimurium (strain LT2 / SGSC1412 / ATCC 700720) protein is D-threonate kinase.